Here is a 206-residue protein sequence, read N- to C-terminus: Translation initiation factor IF-3 (206 aa).

Belongs to the IF-3 family. Monomer.

It localises to the cytoplasm. In terms of biological role, IF-3 binds to the 30S ribosomal subunit and shifts the equilibrium between 70S ribosomes and their 50S and 30S subunits in favor of the free subunits, thus enhancing the availability of 30S subunits on which protein synthesis initiation begins. The sequence is that of Translation initiation factor IF-3 from Chlorobium luteolum (strain DSM 273 / BCRC 81028 / 2530) (Pelodictyon luteolum).